The primary structure comprises 338 residues: MHVYYDKDCDLSIIQSKKVAIIGYGSQGHAHACNLKDSGVDVVVGLRPGSATVKKAEAHGLKVTDVKSAVASADLVMILTPDEFQSKLYKEEIEPNIKKGAALAFAHGFAIHYNQVVPRADLDVIMIAPKAPGHTVRSEFVKGGGIPDLIAIYQDASGKAKDLALSYASGVGGGRTGIIETTFKDETETDLFGEQAVLCGGCVELVKAGFETLVDAGYAPEMAYFECLHELKLIVDLMYEGGIANMNYSISNNAEYGEYVTGPRVINDESRKAMRQALKDIQDGEYAKKFVLEGQTNYASMTAYRRNNAAHQIEVVGAKLRAMMPWIQANKIVDKAKN.

The KARI N-terminal Rossmann domain maps to 1-181 (MHVYYDKDCD…GGGRTGIIET (181 aa)). Residues 24 to 27 (YGSQ), R47, S50, T52, and 82 to 85 (DEFQ) contribute to the NADP(+) site. Residue H107 is part of the active site. NADP(+) is bound at residue G133. The KARI C-terminal knotted domain maps to 182–327 (TFKDETETDL…AKLRAMMPWI (146 aa)). The Mg(2+) site is built by D190, E194, E226, and E230. Substrate is bound at residue S251.

Belongs to the ketol-acid reductoisomerase family. Mg(2+) is required as a cofactor.

The catalysed reaction is (2R)-2,3-dihydroxy-3-methylbutanoate + NADP(+) = (2S)-2-acetolactate + NADPH + H(+). The enzyme catalyses (2R,3R)-2,3-dihydroxy-3-methylpentanoate + NADP(+) = (S)-2-ethyl-2-hydroxy-3-oxobutanoate + NADPH + H(+). It functions in the pathway amino-acid biosynthesis; L-isoleucine biosynthesis; L-isoleucine from 2-oxobutanoate: step 2/4. Its pathway is amino-acid biosynthesis; L-valine biosynthesis; L-valine from pyruvate: step 2/4. Functionally, involved in the biosynthesis of branched-chain amino acids (BCAA). Catalyzes an alkyl-migration followed by a ketol-acid reduction of (S)-2-acetolactate (S2AL) to yield (R)-2,3-dihydroxy-isovalerate. In the isomerase reaction, S2AL is rearranged via a Mg-dependent methyl migration to produce 3-hydroxy-3-methyl-2-ketobutyrate (HMKB). In the reductase reaction, this 2-ketoacid undergoes a metal-dependent reduction by NADPH to yield (R)-2,3-dihydroxy-isovalerate. This chain is Ketol-acid reductoisomerase (NADP(+)), found in Cellvibrio japonicus (strain Ueda107) (Pseudomonas fluorescens subsp. cellulosa).